The primary structure comprises 214 residues: Cell division protein SepF (214 aa).

The interval 23 to 70 (YYDDRAPSRGFPRPRFDDGYGRYDGDDYDDPRREPADYPPPAGYRGGY) is disordered. A compositionally biased stretch (basic and acidic residues) spans 36–58 (PRFDDGYGRYDGDDYDDPRREPA).

The protein belongs to the SepF family. Homodimer. Interacts with FtsZ.

It is found in the cytoplasm. Functionally, cell division protein that is part of the divisome complex and is recruited early to the Z-ring. Probably stimulates Z-ring formation, perhaps through the cross-linking of FtsZ protofilaments. Its function overlaps with FtsA. The sequence is that of Cell division protein SepF from Mycobacterium avium (strain 104).